The chain runs to 389 residues: MNKITGIIAEFNPFHKGHEYLLNQIEGIKIVAMSGNWMQRGEPAIFDKWTRAQMALACGADLVVELPVTVSAQAADFFASGAVDILKNLGITDLAFGSESAIDYNEIADIYEKRGEEMESYIQSLADQLSYPEKTQKMWQHFTGIEFDGNTPNHVLALAYAKAAAGKQINLQAIKRVGKFHSLELTEGFASATALRQELFSLTERQNLLTEQTNQSVSNKLVLTDLSAIKNHVPSAILAAYASPKTNWAAYFPLLQYKIRVDEHLENIFQVNQELSVRLKKAVKSAKNFDELVEQVYTKRYTKARVRRLLTYILLNIPKQFDLPEQIHVLGFSKTGQEILAQNRGKIISKIGQNPWDNLTQKADEIYQLGNVQFEEQNFGRKPIRSSIR.

Residues 8-21 (IAEF…HEYL), Gly97, Asn153, and Arg176 each bind ATP.

It belongs to the TmcAL family.

The protein localises to the cytoplasm. It carries out the reaction cytidine(34) in elongator tRNA(Met) + acetate + ATP = N(4)-acetylcytidine(34) in elongator tRNA(Met) + AMP + diphosphate. In terms of biological role, catalyzes the formation of N(4)-acetylcytidine (ac(4)C) at the wobble position of elongator tRNA(Met), using acetate and ATP as substrates. First activates an acetate ion to form acetyladenylate (Ac-AMP) and then transfers the acetyl group to tRNA to form ac(4)C34. This Lactococcus lactis subsp. lactis (strain IL1403) (Streptococcus lactis) protein is tRNA(Met) cytidine acetate ligase.